We begin with the raw amino-acid sequence, 182 residues long: Transcription termination/antitermination protein NusG (182 aa).

The KOW domain maps to V131–V163.

It belongs to the NusG family.

Its function is as follows. Participates in transcription elongation, termination and antitermination. The polypeptide is Transcription termination/antitermination protein NusG (Staphylococcus aureus (strain NCTC 8325 / PS 47)).